The sequence spans 360 residues: Probable dual-specificity RNA methyltransferase RlmN (360 aa).

E103 functions as the Proton acceptor in the catalytic mechanism. One can recognise a Radical SAM core domain in the interval 109-342; it reads HEYGNSVCVT…VTIRREQGHD (234 aa). C116 and C347 are oxidised to a cystine. [4Fe-4S] cluster contacts are provided by C123, C127, and C130. S-adenosyl-L-methionine is bound by residues 173–174, S205, 228–230, and N304; these read GE and SLH. C347 serves as the catalytic S-methylcysteine intermediate.

Belongs to the radical SAM superfamily. RlmN family. The cofactor is [4Fe-4S] cluster.

It is found in the cytoplasm. It carries out the reaction adenosine(2503) in 23S rRNA + 2 reduced [2Fe-2S]-[ferredoxin] + 2 S-adenosyl-L-methionine = 2-methyladenosine(2503) in 23S rRNA + 5'-deoxyadenosine + L-methionine + 2 oxidized [2Fe-2S]-[ferredoxin] + S-adenosyl-L-homocysteine. It catalyses the reaction adenosine(37) in tRNA + 2 reduced [2Fe-2S]-[ferredoxin] + 2 S-adenosyl-L-methionine = 2-methyladenosine(37) in tRNA + 5'-deoxyadenosine + L-methionine + 2 oxidized [2Fe-2S]-[ferredoxin] + S-adenosyl-L-homocysteine. Functionally, specifically methylates position 2 of adenine 2503 in 23S rRNA and position 2 of adenine 37 in tRNAs. The protein is Probable dual-specificity RNA methyltransferase RlmN of Bacillus pumilus (strain SAFR-032).